Reading from the N-terminus, the 130-residue chain is Protein ApaG (130 aa).

The ApaG domain maps to 3-127 (RAVTRHIEVT…FSLDSPDGKR (125 aa)).

In Bradyrhizobium sp. (strain ORS 278), this protein is Protein ApaG.